The sequence spans 247 residues: ATP synthase subunit a, chloroplastic (247 aa).

Transmembrane regions (helical) follow at residues 38 to 58 (QVLITSWVVIAILLGSVTIAV), 95 to 115 (VPFIGTMFLFIFVSNWSGALF), 134 to 154 (INTTVALALPTSVAYFYAGLT), 199 to 219 (LVVVVLVSLVPSVVPIPVMFL), and 220 to 240 (GLFTSGIQALIFATLAAAYIG).

This sequence belongs to the ATPase A chain family. As to quaternary structure, F-type ATPases have 2 components, CF(1) - the catalytic core - and CF(0) - the membrane proton channel. CF(1) has five subunits: alpha(3), beta(3), gamma(1), delta(1), epsilon(1). CF(0) has four main subunits: a, b, b' and c.

Its subcellular location is the plastid. It localises to the chloroplast thylakoid membrane. In terms of biological role, key component of the proton channel; it plays a direct role in the translocation of protons across the membrane. The sequence is that of ATP synthase subunit a, chloroplastic from Piper cenocladum (Ant piper).